A 55-amino-acid chain; its full sequence is Large ribosomal subunit protein bL33 (55 aa).

This sequence belongs to the bacterial ribosomal protein bL33 family.

The protein is Large ribosomal subunit protein bL33 of Aromatoleum aromaticum (strain DSM 19018 / LMG 30748 / EbN1) (Azoarcus sp. (strain EbN1)).